A 302-amino-acid polypeptide reads, in one-letter code: uncharacterized protein (302 aa).

The disordered stretch occupies residues 1-24 (MTEISELASSSQKPEKTKYNLPKP).

This is an uncharacterized protein from Schizosaccharomyces pombe (strain 972 / ATCC 24843) (Fission yeast).